Here is a 200-residue protein sequence, read N- to C-terminus: LHFPL tetraspan subfamily member 7 protein (200 aa).

The next 4 membrane-spanning stretches (helical) occupy residues 5 to 27, 68 to 88, 113 to 133, and 150 to 170; these read VWVALGLSLTCTSAFSLISPAWF, VSAVMLLGGWLLLAFNAIFLL, AATAMIVGLLIFPIGLASPFI, and LGWGYMTAILNAVLASLLPII.

The protein belongs to the TMEM211 family.

Its subcellular location is the membrane. In Homo sapiens (Human), this protein is LHFPL tetraspan subfamily member 7 protein.